The sequence spans 475 residues: Sulfate adenylyltransferase subunit 1 (475 aa).

Residues 25–239 (KSLLRFLTCG…EVLETVEIQR (215 aa)) enclose the tr-type G domain. The segment at 34-41 (GSVDDGKS) is G1. GTP is bound at residue 34-41 (GSVDDGKS). The segment at 92–96 (GITID) is G2. The G3 stretch occupies residues 113–116 (DTPG). GTP-binding positions include 113–117 (DTPGH) and 168–171 (NKMD). Residues 168-171 (NKMD) are G4. The segment at 206 to 208 (SAL) is G5.

It belongs to the TRAFAC class translation factor GTPase superfamily. Classic translation factor GTPase family. CysN/NodQ subfamily. In terms of assembly, heterodimer composed of CysD, the smaller subunit, and CysN.

It carries out the reaction sulfate + ATP + H(+) = adenosine 5'-phosphosulfate + diphosphate. Its pathway is sulfur metabolism; hydrogen sulfide biosynthesis; sulfite from sulfate: step 1/3. Its function is as follows. With CysD forms the ATP sulfurylase (ATPS) that catalyzes the adenylation of sulfate producing adenosine 5'-phosphosulfate (APS) and diphosphate, the first enzymatic step in sulfur assimilation pathway. APS synthesis involves the formation of a high-energy phosphoric-sulfuric acid anhydride bond driven by GTP hydrolysis by CysN coupled to ATP hydrolysis by CysD. This chain is Sulfate adenylyltransferase subunit 1, found in Escherichia coli O127:H6 (strain E2348/69 / EPEC).